Reading from the N-terminus, the 269-residue chain is MTALPRYSVFGNPVAHSKSPQIHQQFALQEGVDIEYERICADIGGFAQAVSTFFGTGGCGANVTVPFKQEAFHLADEHSDRALAAGAVNTLILLKNGKLRGDNTDGIGLANDITQVKNIAIEGKTILLLGAGGAVRGVIPVLKEHRPARIVIANRTRAKAEELAQLFGIEAVPMADVNGGFDIIINGTSGGLNGQIPDIPPDIFQNCALAYDMVYGCAAKPFLDFARQSGAKKTADGLGMLVGQAAASYALWRGFTPDIRPVIEYMKAM.

Residues 17–19 and Thr-64 contribute to the shikimate site; that span reads SKS. Lys-68 acts as the Proton acceptor in catalysis. NADP(+) is bound at residue Asp-80. Shikimate contacts are provided by Asn-89 and Asp-105. NADP(+)-binding positions include 130–134, 154–159, and Met-213; these read GAGGA and NRTRAK. Position 215 (Tyr-215) interacts with shikimate. Gly-237 contacts NADP(+).

The protein belongs to the shikimate dehydrogenase family. As to quaternary structure, homodimer.

It catalyses the reaction shikimate + NADP(+) = 3-dehydroshikimate + NADPH + H(+). It functions in the pathway metabolic intermediate biosynthesis; chorismate biosynthesis; chorismate from D-erythrose 4-phosphate and phosphoenolpyruvate: step 4/7. Functionally, involved in the biosynthesis of the chorismate, which leads to the biosynthesis of aromatic amino acids. Catalyzes the reversible NADPH linked reduction of 3-dehydroshikimate (DHSA) to yield shikimate (SA). The protein is Shikimate dehydrogenase (NADP(+)) of Neisseria meningitidis serogroup C (strain 053442).